A 719-amino-acid chain; its full sequence is Forkhead box protein K1 (719 aa).

An N-acetylalanine modification is found at Ala-2. An interaction with SIN3A and SIN3B region spans residues 2-40 (AEVGEDSGARALLALRSAPCSPVLCAAAAAAAFPATTSP). The segment at 35-67 (PATTSPPPPAQPPPGPPALPAEPGPGPVPSTVA) is disordered. The segment covering 38 to 62 (TSPPPPAQPPPGPPALPAEPGPGPV) has biased composition (pro residues). A required for interaction with FOXO4 and MEF2C region spans residues 81 to 406 (AASVRQSPGP…PLSSRSAPAS (326 aa)). Position 87 is a phosphoserine (Ser-87). The FHA domain maps to 109-161 (VTIGRNSSQGSVDLSMGLSSFISRRHLQLSFQEPHFYLRCLGKNGVFVDGAFQ). Omega-N-methylarginine occurs at positions 147 and 177. Ser-199, Ser-209, Ser-225, and Ser-229 each carry phosphoserine. Residues Thr-231 and Thr-233 each carry the phosphothreonine modification. Phosphoserine occurs at positions 239, 243, 281, and 285. The segment at residues 291-386 (KPPYSYAQLI…EQAFRKRRQR (96 aa)) is a DNA-binding region (fork-head). Residues 399–443 (SSRSAPASPTHPGLMSPRSSGLQTPECLSREGSPIPHDPDLGSKL) are disordered. Phosphoserine occurs at positions 402 and 406. Thr-408 carries the phosphothreonine modification. Ser-414 bears the Phosphoserine mark. Position 422 is a phosphothreonine (Thr-422). 3 positions are modified to phosphoserine: Ser-427, Ser-431, and Ser-445. The segment covering 665 to 685 (AANAAPTPAASTTTSASSSGE) has biased composition (low complexity). The tract at residues 665–719 (AANAAPTPAASTTTSASSSGEPEVKRSRVEEPGGTATTQPTAMAATGPQGPGTGE) is disordered. A compositionally biased stretch (basic and acidic residues) spans 686–695 (PEVKRSRVEE). Residues 696–712 (PGGTATTQPTAMAATGP) are compositionally biased toward low complexity.

Interacts with SIN3A and SIN3B (via PAH2) to form a complex which represses transcription. Component of SIN3A-, but not SIN3B-, containing multiprotein complexes. Interacts with FOXO4 and MEF2C; both interactions inhibit FOXO4 and MEF2C transactivation activity. Interacts (when phosphorylated) with YWHAE/14-3-3-epsilon; promotes sequestration in the cytoplasm and leads to impaired ability to bind DNA. Interacts with FHL2. Interacts with SRF. Interacts with DVL2 and DVL3; the interaction induces DVL2 nuclear translocation. Interacts with BAP1 (when phosphorylated). Accessory component of the polycomb repressive deubiquitinase (PR-DUB) complex, at least composed of BAP1, one of ASXL1, ASXL2 or (probably) ASXL3 and one of MBD5 or MBD6. The PR-DUB core associates with a number of accessory proteins, including FOXK1, FOXK2, KDM1B, HCFC1 and OGT. In terms of processing, phosphorylation by GSK3 (GSK3A or GSK3B) promotes interaction with YWHAE/14-3-3-epsilon and retention in the cytoplasm. In response to mTORC1 signaling, phosphorylation by GSK3 is prevented, leading to translocation to the nucleus. As to expression, expressed in tissues and cells in which the myoglobin gene is transcriptionally active including cardiac and skeletal myocytes, brain and kidney. In the adult brain, expressed in the piriform cortex and the indusium griseum. In the hippocampus, expression is localized to the dentate gyrus and CA3 area. In the cerebellum, expression is confined to the Purkinje cell layer. Present in neuroretinal cells: expressed in rod bipolar cells, amacrine cells and ganglion cells (at protein level).

The protein localises to the nucleus. It localises to the cytoplasm. Functionally, transcriptional regulator involved in different processes such as glucose metabolism, aerobic glycolysis, muscle cell differentiation and autophagy. Recognizes and binds the forkhead DNA sequence motif (5'-GTAAACA-3') and can both act as a transcription activator or repressor, depending on the context. Together with FOXK2, acts as a key regulator of metabolic reprogramming towards aerobic glycolysis, a process in which glucose is converted to lactate in the presence of oxygen. Acts by promoting expression of enzymes for glycolysis (such as hexokinase-2 (HK2), phosphofructokinase, pyruvate kinase (PKLR) and lactate dehydrogenase), while suppressing further oxidation of pyruvate in the mitochondria by up-regulating pyruvate dehydrogenase kinases PDK1 and PDK4. Probably plays a role in gluconeogenesis during overnight fasting, when lactate from white adipose tissue and muscle is the main substrate. Involved in mTORC1-mediated metabolic reprogramming: in response to mTORC1 signaling, translocates into the nucleus and regulates the expression of genes associated with glycolysis and downstream anabolic pathways, such as HIF1A, thereby regulating glucose metabolism. Together with FOXK2, acts as a negative regulator of autophagy in skeletal muscle: in response to starvation, enters the nucleus, binds the promoters of autophagy genes and represses their expression, preventing proteolysis of skeletal muscle proteins. Acts as a transcriptional regulator of the myogenic progenitor cell population in skeletal muscle. Binds to the upstream enhancer region (CCAC box) of myoglobin (MB) gene, regulating the myogenic progenitor cell population. Promotes muscle progenitor cell proliferation by repressing the transcriptional activity of FOXO4, thereby inhibiting myogenic differentiation. Involved in remodeling processes of adult muscles that occur in response to physiological stimuli. Required to correct temporal orchestration of molecular and cellular events necessary for muscle repair. Represses myogenic differentiation by inhibiting MEFC activity. Positively regulates Wnt/beta-catenin signaling by translocating DVL into the nucleus. Reduces virus replication, probably by binding the interferon stimulated response element (ISRE) to promote antiviral gene expression. Accessory component of the polycomb repressive deubiquitinase (PR-DUB) complex; recruits the PR-DUB complex to specific FOXK1-bound genes. This Mus musculus (Mouse) protein is Forkhead box protein K1.